A 143-amino-acid polypeptide reads, in one-letter code: 3-dehydroquinate dehydratase (143 aa).

Tyr22 serves as the catalytic Proton acceptor. Substrate contacts are provided by Asn73, His79, and Asp86. The Proton donor role is filled by His99. Substrate is bound by residues 100 to 101 (IS) and Arg110.

This sequence belongs to the type-II 3-dehydroquinase family. As to quaternary structure, homododecamer.

It catalyses the reaction 3-dehydroquinate = 3-dehydroshikimate + H2O. It functions in the pathway metabolic intermediate biosynthesis; chorismate biosynthesis; chorismate from D-erythrose 4-phosphate and phosphoenolpyruvate: step 3/7. Functionally, catalyzes a trans-dehydration via an enolate intermediate. This is 3-dehydroquinate dehydratase from Mycolicibacterium paratuberculosis (strain ATCC BAA-968 / K-10) (Mycobacterium paratuberculosis).